The sequence spans 627 residues: Carnitine O-acetyltransferase (627 aa).

A propeptide spanning residues 1–30 is cleaved from the precursor; it reads MDRKQKQAEKARPYGLLKPAALGKIPGRFQ. Residue Lys94 is modified to N6-succinyllysine. Position 262 is an N6-acetyllysine; alternate (Lys262). The residue at position 262 (Lys262) is an N6-succinyllysine; alternate. At Lys269 the chain carries N6-acetyllysine. His344 functions as the Proton acceptor in the catalytic mechanism. CoA contacts are provided by residues Lys420 and 424 to 431; that span reads KSEKISPD. The (R)-carnitine site is built by Tyr453 and Ser455. Ser457 lines the CoA pocket. Residue Thr466 coordinates (R)-carnitine. Residue Gln556 participates in CoA binding. The Microbody targeting signal motif lies at 625–627; it reads SKL.

This sequence belongs to the carnitine/choline acetyltransferase family. Monomer.

The protein resides in the endoplasmic reticulum. The protein localises to the peroxisome. Its subcellular location is the mitochondrion inner membrane. It carries out the reaction (R)-carnitine + acetyl-CoA = O-acetyl-(R)-carnitine + CoA. It catalyses the reaction propanoyl-CoA + (R)-carnitine = O-propanoyl-(R)-carnitine + CoA. The catalysed reaction is butanoyl-CoA + (R)-carnitine = O-butanoyl-(R)-carnitine + CoA. The enzyme catalyses hexanoyl-CoA + (R)-carnitine = O-hexanoyl-(R)-carnitine + CoA. It carries out the reaction octanoyl-CoA + (R)-carnitine = O-octanoyl-(R)-carnitine + CoA. It catalyses the reaction decanoyl-CoA + (R)-carnitine = O-decanoyl-(R)-carnitine + CoA. The catalysed reaction is 3-methylbutanoyl-CoA + (R)-carnitine = O-3-methylbutanoyl-(R)-carnitine + CoA. The enzyme catalyses 2-methylpropanoyl-CoA + (R)-carnitine = O-isobutanoyl-(R)-carnitine + CoA. It carries out the reaction 2-methylbutanoyl-CoA + (R)-carnitine = O-2-methylbutanoyl-(R)-carnitine + CoA. It catalyses the reaction acetoacetyl-CoA + (R)-carnitine = O-3-oxobutanoyl-(R)-carnitine + CoA. The catalysed reaction is 3-hydroxybutanoyl-CoA + (R)-carnitine = O-3-hydroxybutanoyl-(R)-carnitine + CoA. The enzyme catalyses 4,8-dimethylnonanoyl-CoA + (R)-carnitine = O-4,8-dimethylnonanoyl-(R)-carnitine + CoA. It carries out the reaction 2,6-dimethylheptanoyl-CoA + (R)-carnitine = O-2,6-dimethylheptanoyl-(R)-carnitine + CoA. Functionally, catalyzes the reversible transfer of acyl groups from carnitine to coenzyme A (CoA) and regulates the acyl-CoA/CoA ratio. Also plays a crucial role in the transport of fatty acids for beta-oxidation. Responsible for the synthesis of short- and branched-chain acylcarnitines. Active towards some branched-chain amino acid oxidation pathway (BCAAO) intermediates. Trans-2-enoyl-CoAs and 2-methylacyl-CoAs are poor substrates. The polypeptide is Carnitine O-acetyltransferase (CRAT) (Columba livia (Rock dove)).